The sequence spans 226 residues: Ribonuclease 3 (226 aa).

The 123-residue stretch at Leu7–Asp129 folds into the RNase III domain. A Mg(2+)-binding site is contributed by Glu42. Residue Asp46 is part of the active site. Positions 115 and 118 each coordinate Mg(2+). Glu118 is an active-site residue. In terms of domain architecture, DRBM spans Asp156–Lys226.

This sequence belongs to the ribonuclease III family. In terms of assembly, homodimer. It depends on Mg(2+) as a cofactor.

It localises to the cytoplasm. The catalysed reaction is Endonucleolytic cleavage to 5'-phosphomonoester.. Its function is as follows. Digests double-stranded RNA. Involved in the processing of primary rRNA transcript to yield the immediate precursors to the large and small rRNAs (23S and 16S). Processes some mRNAs, and tRNAs when they are encoded in the rRNA operon. Processes pre-crRNA and tracrRNA of type II CRISPR loci if present in the organism. The polypeptide is Ribonuclease 3 (Shewanella baltica (strain OS185)).